Reading from the N-terminus, the 383-residue chain is Succinyl-diaminopimelate desuccinylase (383 aa).

H74 is a binding site for Zn(2+). Residue D76 is part of the active site. D107 is a Zn(2+) binding site. The active-site Proton acceptor is E141. Zn(2+) contacts are provided by E142, E170, and H356.

This sequence belongs to the peptidase M20A family. DapE subfamily. In terms of assembly, homodimer. Zn(2+) serves as cofactor. The cofactor is Co(2+).

It carries out the reaction N-succinyl-(2S,6S)-2,6-diaminopimelate + H2O = (2S,6S)-2,6-diaminopimelate + succinate. It participates in amino-acid biosynthesis; L-lysine biosynthesis via DAP pathway; LL-2,6-diaminopimelate from (S)-tetrahydrodipicolinate (succinylase route): step 3/3. Its function is as follows. Catalyzes the hydrolysis of N-succinyl-L,L-diaminopimelic acid (SDAP), forming succinate and LL-2,6-diaminopimelate (DAP), an intermediate involved in the bacterial biosynthesis of lysine and meso-diaminopimelic acid, an essential component of bacterial cell walls. The protein is Succinyl-diaminopimelate desuccinylase of Cupriavidus necator (strain ATCC 17699 / DSM 428 / KCTC 22496 / NCIMB 10442 / H16 / Stanier 337) (Ralstonia eutropha).